Reading from the N-terminus, the 452-residue chain is Protoheme IX farnesyltransferase, mitochondrial (452 aa).

A mitochondrion-targeting transit peptide spans 1 to 27 (MSLVIQPLLMRALNPNLSSILISGRGF). A run of 7 helical transmembrane segments spans residues 152–172 (VLVM…ATVL), 235–255 (ILWL…IALY), 267–287 (IINT…GWAA), 291–311 (LSHP…FPHF), 341–361 (VALR…YFNV), 364–386 (WYYQ…KFYF), and 417–437 (TFWV…LHKK).

It belongs to the UbiA prenyltransferase family.

It is found in the mitochondrion membrane. Converts protoheme IX and farnesyl diphosphate to heme O. In Kluyveromyces lactis (strain ATCC 8585 / CBS 2359 / DSM 70799 / NBRC 1267 / NRRL Y-1140 / WM37) (Yeast), this protein is Protoheme IX farnesyltransferase, mitochondrial (COX10).